Consider the following 556-residue polypeptide: PPE family protein PPE2 (556 aa).

Residues 8-164 (ASPPEVHSAL…ASYQAVSTAA (157 aa)) are PPE. The segment at 201–256 (QKIGYTDFYNNVIQPFINWLTNLPFLQAMFSGFDPWLPSLGNPLTFLSPANIAFAL) is SH3-like. The segment at 319 to 340 (LEQTLALLPAALPLLAAPLAPL) is leucine zipper motif. Disordered regions lie at residues 385-418 (TPTP…PPVT) and 443-556 (GTGV…TRVE). The segment covering 400–417 (PTPPLGPPPPPVTAPPPV) has biased composition (pro residues). A compositionally biased stretch (low complexity) spans 456–471 (AEAPASAAAPEEQVQP). The span at 472–481 (QRRRRPKIKQ) shows a compositional bias: basic residues. The short motif at 473 to 481 (RRRRPKIKQ) is the Nuclear localization signal element.

Belongs to the mycobacterial PPE family.

It localises to the secreted. The protein resides in the host cytoplasm. Its subcellular location is the host nucleus. Inhibits nitric oxide (NO) production in activated macrophages. Acts by inhibiting expression of the host inducible nitric oxide synthase (iNOS). PPE2 is translocated into the host macrophage nucleus, where it interacts with a GATA-binding site overlapping with the TATA box of NOS2 (iNOS) promoter, and strongly inhibits NOS2 gene transcription. Reduction in NO production in turn facilitates intracellular survival of the bacilli inside the macrophage. In addition, disrupts the assembly of NADPH oxidase complex, which inhibits NADPH oxidase-mediated reactive oxygen species (ROS) generation in macrophages and favors M.tuberculosis survival. Acts by interacting with NCF2, the cytosolic subunit of NADPH oxidase, and preventing translocation of NCF2 and NCF1 to the membrane, which causes a reduction of the functional assembly of NADPH oxidase complex and a decrease in NADPH oxidase activity. The polypeptide is PPE family protein PPE2 (PPE2) (Mycobacterium tuberculosis (strain CDC 1551 / Oshkosh)).